Reading from the N-terminus, the 244-residue chain is Ribosomal RNA large subunit methyltransferase E (244 aa).

Residues Gly-81, Trp-83, Asp-109, Asp-125, and Asp-149 each contribute to the S-adenosyl-L-methionine site. The active-site Proton acceptor is the Lys-189.

The protein belongs to the class I-like SAM-binding methyltransferase superfamily. RNA methyltransferase RlmE family.

Its subcellular location is the cytoplasm. It carries out the reaction uridine(2552) in 23S rRNA + S-adenosyl-L-methionine = 2'-O-methyluridine(2552) in 23S rRNA + S-adenosyl-L-homocysteine + H(+). In terms of biological role, specifically methylates the uridine in position 2552 of 23S rRNA at the 2'-O position of the ribose in the fully assembled 50S ribosomal subunit. The protein is Ribosomal RNA large subunit methyltransferase E of Cereibacter sphaeroides (strain ATCC 17023 / DSM 158 / JCM 6121 / CCUG 31486 / LMG 2827 / NBRC 12203 / NCIMB 8253 / ATH 2.4.1.) (Rhodobacter sphaeroides).